Here is a 215-residue protein sequence, read N- to C-terminus: Ribonuclease T (215 aa).

An Exonuclease domain is found at 20–194 (VVIDVETAGF…YDTERTAVLF (175 aa)). Positions 23, 25, 181, and 186 each coordinate Mg(2+). Residue H181 is the Proton donor/acceptor of the active site.

Belongs to the RNase T family. In terms of assembly, homodimer. Mg(2+) is required as a cofactor.

Its function is as follows. Trims short 3' overhangs of a variety of RNA species, leaving a one or two nucleotide 3' overhang. Responsible for the end-turnover of tRNA: specifically removes the terminal AMP residue from uncharged tRNA (tRNA-C-C-A). Also appears to be involved in tRNA biosynthesis. This Salmonella paratyphi A (strain ATCC 9150 / SARB42) protein is Ribonuclease T.